The chain runs to 1954 residues: Integrin beta-like protein C (1954 aa).

The signal sequence occupies residues 1–20 (MNKLFYLFILIASLFILTDA). At 21-1883 (SHFRFGTISW…TTTQTNDNKT (1863 aa)) the chain is on the extracellular side. N138 and N354 each carry an N-linked (GlcNAc...) asparagine glycan. Residues 428 to 465 (YGENCVAVPPCVNGVPNSGINGDGKCLCSNGWTGADCS) form the EGF-like domain. 2 cysteine pairs are disulfide-bonded: C438–C453 and C455–C464. An N-linked (GlcNAc...) asparagine glycan is attached at N479. One can recognise a VWFA domain in the interval 521–706 (DVYVLVDANL…TGVKNVLSKI (186 aa)). N-linked (GlcNAc...) asparagine glycosylation is found at N1348, N1382, N1628, N1678, N1742, N1770, N1820, N1860, and N1881. A helical transmembrane segment spans residues 1884-1904 (VLTGAIAGAAAGTALIAAAAW). Residues 1905 to 1954 (RLLRKAAPPTDTFFSEAAFLGDGVSSNPLYEQSASAAENPLYQSASDTTD) are Cytoplasmic-facing.

Belongs to the SIB family. As to quaternary structure, interacts with talA/talin.

The protein localises to the membrane. Functionally, implicated in cellular adhesion. This Dictyostelium discoideum (Social amoeba) protein is Integrin beta-like protein C (sibC).